The following is a 315-amino-acid chain: Glutathione synthetase (315 aa).

The 186-residue stretch at 125–310 (KLFTAWFSEF…ITGMLFDAIE (186 aa)) folds into the ATP-grasp domain. 151–207 (HQAKGDIILKPLDGMGGTSIFRVKQDDPNLGVIIETLTQYGNQYAMAQAFIPEITKG) contributes to the ATP binding site. Residues Glu281 and Asn283 each coordinate Mg(2+).

Belongs to the prokaryotic GSH synthase family. It depends on Mg(2+) as a cofactor. Mn(2+) is required as a cofactor.

The catalysed reaction is gamma-L-glutamyl-L-cysteine + glycine + ATP = glutathione + ADP + phosphate + H(+). It participates in sulfur metabolism; glutathione biosynthesis; glutathione from L-cysteine and L-glutamate: step 2/2. This chain is Glutathione synthetase, found in Shewanella oneidensis (strain ATCC 700550 / JCM 31522 / CIP 106686 / LMG 19005 / NCIMB 14063 / MR-1).